We begin with the raw amino-acid sequence, 469 residues long: MSNIYIQEPPTNGKVLLKTTAGDIDIELWSKEAPKACRNFIQLCLEAYYDNTIFHRVVPGFIVQGGDPTGTGTGGESIYGAPFKDEFHSRLRFNRRGLVAMANAGPHDNGSQFFFTLGRADELNNKHTIFGKVTGDTVYNMLRLTEVDIDDEERPRNPHRIKSCEVLFNPFDDITPREIKKPKNEKPEEEVKKLKPKGTKNFSLLSFGEEAEEEEEEVNRVSQSMKGRSKSSHDLLKDDPHLSSVPAVESEKDDATGDLEDDGEDDSAERDEYMEDDEKNLMRERIAKRLKKDASASVKSAGDGEKKPASRSEELRKEARQLKRELLAAKQKKETAIKVEEGREEEEAAPDGAVAEYRREKQKYEALRKQQPKKGTSREDQTLALLSQFKSKLTQAITETPENSVPEAEVEDDEGWMSHVLQFEDKTRKVKDASMQDSDTFEIYDPRNPVNKRRREESKKLLREKKERR.

At Ser2 the chain carries N-acetylserine. The 156-residue stretch at 11–166 (TNGKVLLKTT…NPHRIKSCEV (156 aa)) folds into the PPIase cyclophilin-type domain. The span at 175-193 (TPREIKKPKNEKPEEEVKK) shows a compositional bias: basic and acidic residues. Disordered stretches follow at residues 175-415 (TPRE…DDEG) and 428-469 (RKVK…KERR). Residues 206-229 (SFGEEAEEEEEEVNRVSQSMKGRS) adopt a coiled-coil conformation. The segment covering 231 to 241 (SSHDLLKDDPH) has biased composition (basic and acidic residues). Residues 256–278 (TGDLEDDGEDDSAERDEYMEDDE) are compositionally biased toward acidic residues. Composition is skewed to basic and acidic residues over residues 302–341 (GDGE…KVEE) and 356–368 (EYRR…EALR). The stretch at 309–371 (ASRSEELRKE…QKYEALRKQQ (63 aa)) forms a coiled coil. The segment covering 384 to 403 (ALLSQFKSKLTQAITETPEN) has biased composition (polar residues). The span at 454-469 (RREESKKLLREKKERR) shows a compositional bias: basic and acidic residues.

The protein belongs to the cyclophilin-type PPIase family. In terms of assembly, part of the activated spliceosome B/catalytic step 1 spliceosome, one of the forms of the spliceosome which has a well-formed active site but still cannot catalyze the branching reaction and is composed at least of 52 proteins, the U2, U5 and U6 snRNAs and the pre-mRNA. Recruited during early steps of activated spliceosome B maturation, it is probably one of the first proteins released from this complex as he matures to the spliceosome C complex. Component of the minor spliceosome, which splices U12-type introns.

The protein resides in the nucleus. Its function is as follows. As part of the spliceosome, plays a role in pre-mRNA splicing. Probable inactive PPIase with no peptidyl-prolyl cis-trans isomerase activity. As a component of the minor spliceosome, involved in the splicing of U12-type introns in pre-mRNAs. The chain is Spliceosome-associated protein CWC27 homolog from Mus musculus (Mouse).